The primary structure comprises 291 residues: Beta-lactamase CTX-M-25 (291 aa).

Residues 1–30 form the signal peptide; sequence MMRKSVRRAMLMTTACVSLLLASVPLCAQA. Catalysis depends on Ser73, which acts as the Nucleophile; acyl-ester intermediate. Lys76, Ser133, Glu169, and Ser240 together coordinate a beta-lactam.

The protein belongs to the class-A beta-lactamase family. Monomer.

It is found in the secreted. The enzyme catalyses a beta-lactam + H2O = a substituted beta-amino acid. With respect to regulation, inhibited by the beta-lactamase-blocking agents clavulanic acid and tazobactam; in the DH10B strain. In terms of biological role, extended-spectrum beta-lactamase (ESBL) which confers resistance to penicillins, as well as first, second and third-generation cephalosporins. Has cefotaxime-hydrolyzing activity. Inactive against cephalosporin antibiotic, cefoxitin, and the carbapenem, imipenem. This chain is Beta-lactamase CTX-M-25, found in Escherichia coli.